Reading from the N-terminus, the 343-residue chain is MTPAVFLVILCLGVVPGASALDLSLDVQWQEWKIKYEKLYSPEEEVLKRVVWEENVKKIELHNRENSLGKNTYTMEINDFADMTDEEFKDMIIGFQLPVHNTEKRLWKRALGSFFPNSWNWRDALPKFVDWRNEGYVTRVRKQGGCSSCWAFPVTGAIEGQMFKKTGKLIPLSVQNLIDCSKPQGNRGCLWGNTYNAFQYVLHNGGLEAEATYPYERKEGVCRYNPKNSSAKITGFVVLPESEDVLMDAVATKGPIATGVHVISSSFRFYQKGVYHEPKCSSYVNHAVLVVGYGFEGNETDGNNYWLIKNSWGKRWGLRGYMKIAKDRNNHCAIASLAQYPTV.

An N-terminal signal peptide occupies residues 1-20 (MTPAVFLVILCLGVVPGASA). The propeptide at 21 to 124 (LDLSLDVQWQ…FPNSWNWRDA (104 aa)) is activation peptide. 2 cysteine pairs are disulfide-bonded: C146/C189 and C180/C222. C149 is a catalytic residue. N228 carries an N-linked (GlcNAc...) asparagine glycan. An intrachain disulfide couples C280 to C332. H286 is an active-site residue. Residue N298 is glycosylated (N-linked (GlcNAc...) asparagine). The active site involves N310.

Belongs to the peptidase C1 family. In terms of tissue distribution, highly expressed in placenta.

It is found in the lysosome. In Rattus norvegicus (Rat), this protein is Cathepsin Q (Ctsq).